The primary structure comprises 294 residues: Probable endonuclease 4 (294 aa).

The Zn(2+) site is built by His-71, His-111, Glu-148, Asp-182, His-185, His-217, Asp-230, His-232, and Glu-262.

This sequence belongs to the AP endonuclease 2 family. Zn(2+) is required as a cofactor.

It carries out the reaction Endonucleolytic cleavage to 5'-phosphooligonucleotide end-products.. Endonuclease IV plays a role in DNA repair. It cleaves phosphodiester bonds at apurinic or apyrimidinic (AP) sites, generating a 3'-hydroxyl group and a 5'-terminal sugar phosphate. The chain is Probable endonuclease 4 from Acholeplasma laidlawii (strain PG-8A).